The chain runs to 454 residues: Chromosomal replication initiator protein DnaA (454 aa).

A domain I, interacts with DnaA modulators region spans residues Met1–Ala83. Residues Ala83–Arg115 are domain II. The segment at Leu116 to Asn333 is domain III, AAA+ region. 4 residues coordinate ATP: Gly160, Gly162, Lys163, and Ser164. The tract at residues Ser334 to Phe454 is domain IV, binds dsDNA.

Belongs to the DnaA family. As to quaternary structure, oligomerizes as a right-handed, spiral filament on DNA at oriC.

The protein resides in the cytoplasm. In terms of biological role, plays an essential role in the initiation and regulation of chromosomal replication. ATP-DnaA binds to the origin of replication (oriC) to initiate formation of the DNA replication initiation complex once per cell cycle. Binds the DnaA box (a 9 base pair repeat at the origin) and separates the double-stranded (ds)DNA. Forms a right-handed helical filament on oriC DNA; dsDNA binds to the exterior of the filament while single-stranded (ss)DNA is stabiized in the filament's interior. The ATP-DnaA-oriC complex binds and stabilizes one strand of the AT-rich DNA unwinding element (DUE), permitting loading of DNA polymerase. After initiation quickly degrades to an ADP-DnaA complex that is not apt for DNA replication. Binds acidic phospholipids. This Desulfatibacillum aliphaticivorans protein is Chromosomal replication initiator protein DnaA.